A 433-amino-acid chain; its full sequence is Leucine-rich repeat extensin-like protein 7 (433 aa).

Positions 1-21 (MRIYQPTLLIFTTVVLLSISA) are cleaved as a signal peptide. N71 is a glycosylation site (N-linked (GlcNAc...) asparagine). 9 LRR repeats span residues 98 to 122 (VKTV…LGLL), 123 to 145 (TDIA…GFSQ), 146 to 170 (LSLL…VIGL), 171 to 194 (PKLK…LFDK), 196 to 217 (LDAL…MGNS), 219 to 239 (VSVL…SFGK), 241 to 265 (GKTL…MGLL), 266 to 289 (QNVT…MGQM), and 290 to 313 (ENLE…LCSL). The N-linked (GlcNAc...) asparagine glycan is linked to N267. A glycan (N-linked (GlcNAc...) asparagine) is linked at N340. Residues 380-433 (FSPPPSQISPSSQPLAPAPSPTSPPLSTPPPARPCPPVYSPPPPPPLSLAPSMN) are disordered. The contains the Ser-Pro(4) repeats stretch occupies residues 381–433 (SPPPSQISPSSQPLAPAPSPTSPPLSTPPPARPCPPVYSPPPPPPLSLAPSMN). Residues 395–427 (APAPSPTSPPLSTPPPARPCPPVYSPPPPPPLS) are compositionally biased toward pro residues.

In terms of processing, hydroxylated on proline residues in the S-P-P-P-P repeat. O-glycosylated on hydroxyprolines. Expressed in flowers and pollen.

Its subcellular location is the secreted. The protein resides in the cell wall. Functionally, modulates cell morphogenesis by regulating cell wall formation and assembly, and/or growth polarization. This is Leucine-rich repeat extensin-like protein 7 (LRX7) from Arabidopsis thaliana (Mouse-ear cress).